The chain runs to 155 residues: 3-hydroxyacyl-[acyl-carrier-protein] dehydratase FabZ (155 aa).

His54 is a catalytic residue.

Belongs to the thioester dehydratase family. FabZ subfamily.

The protein localises to the cytoplasm. It carries out the reaction a (3R)-hydroxyacyl-[ACP] = a (2E)-enoyl-[ACP] + H2O. Its function is as follows. Involved in unsaturated fatty acids biosynthesis. Catalyzes the dehydration of short chain beta-hydroxyacyl-ACPs and long chain saturated and unsaturated beta-hydroxyacyl-ACPs. This Burkholderia lata (strain ATCC 17760 / DSM 23089 / LMG 22485 / NCIMB 9086 / R18194 / 383) protein is 3-hydroxyacyl-[acyl-carrier-protein] dehydratase FabZ.